A 1453-amino-acid polypeptide reads, in one-letter code: Leucine-rich repeat-containing protein 9 (1453 aa).

LRR repeat units lie at residues 53–78, 97–119, 120–141, 142–164, 166–188, 224–248, and 264–287; these read FPNL…CLQL, CRNL…LEKL, IKLK…LQTL, KNLK…LDSN, QLER…NLTR, LQRF…AMKK, and KEDL…RVKL. The tract at residues 302 to 321 is disordered; it reads LKGSGKGHSDGSNNSKVTDP. LRR repeat units follow at residues 344–367, 671–693, 694–715, 716–737, 739–758, 759–784, 786–812, 886–908, 909–930, 931–952, 953–975, 976–1001, 1023–1048, 1092–1115, 1116–1138, 1139–1161, 1201–1224, 1225–1247, 1248–1270, 1272–1292, 1293–1317, 1319–1345, and 1365–1388; these read LNAL…IYHI, KARP…TSVY, SHIV…LSKL, TGLR…VYHL, NLEY…GFRG, LMKL…MLCK, TTSL…VIGR, YLKI…LEKL, ENLK…LESC, INLE…ISKM, TKLT…TFDN, MLHL…SFTL, LCNL…LFVI, FKQM…PVDQ, FRNV…LIYL, PNVK…LKPQ, MHSL…QLNR, LRNL…LDNL, VVLQ…AFAK, SSLL…KLQS, LVKL…KLDV, STLR…IFRL, and EFHL…PMDG.

The sequence is that of Leucine-rich repeat-containing protein 9 (LRRC9) from Homo sapiens (Human).